The primary structure comprises 454 residues: Bifunctional protein GlmU (454 aa).

Positions Met1–Arg226 are pyrophosphorylase. UDP-N-acetyl-alpha-D-glucosamine-binding positions include Leu8 to Gly11, Lys22, Gln73, Gly78 to Thr79, Tyr100 to Asp102, Gly137, Glu151, Asn166, and Asn224. A Mg(2+)-binding site is contributed by Asp102. Residue Asn224 participates in Mg(2+) binding. Residues Val227–Ala247 are linker. Residues Gly248 to Glu454 form an N-acetyltransferase region. UDP-N-acetyl-alpha-D-glucosamine-binding residues include Arg330 and Lys348. His360 serves as the catalytic Proton acceptor. The UDP-N-acetyl-alpha-D-glucosamine site is built by Tyr363 and Asn374. Residues Ala377, Asn383 to Tyr384, Ser402, Ala420, and Arg437 contribute to the acetyl-CoA site.

The protein in the N-terminal section; belongs to the N-acetylglucosamine-1-phosphate uridyltransferase family. It in the C-terminal section; belongs to the transferase hexapeptide repeat family. As to quaternary structure, homotrimer. Mg(2+) serves as cofactor.

It is found in the cytoplasm. The enzyme catalyses alpha-D-glucosamine 1-phosphate + acetyl-CoA = N-acetyl-alpha-D-glucosamine 1-phosphate + CoA + H(+). It catalyses the reaction N-acetyl-alpha-D-glucosamine 1-phosphate + UTP + H(+) = UDP-N-acetyl-alpha-D-glucosamine + diphosphate. Its pathway is nucleotide-sugar biosynthesis; UDP-N-acetyl-alpha-D-glucosamine biosynthesis; N-acetyl-alpha-D-glucosamine 1-phosphate from alpha-D-glucosamine 6-phosphate (route II): step 2/2. The protein operates within nucleotide-sugar biosynthesis; UDP-N-acetyl-alpha-D-glucosamine biosynthesis; UDP-N-acetyl-alpha-D-glucosamine from N-acetyl-alpha-D-glucosamine 1-phosphate: step 1/1. It participates in bacterial outer membrane biogenesis; LPS lipid A biosynthesis. Functionally, catalyzes the last two sequential reactions in the de novo biosynthetic pathway for UDP-N-acetylglucosamine (UDP-GlcNAc). The C-terminal domain catalyzes the transfer of acetyl group from acetyl coenzyme A to glucosamine-1-phosphate (GlcN-1-P) to produce N-acetylglucosamine-1-phosphate (GlcNAc-1-P), which is converted into UDP-GlcNAc by the transfer of uridine 5-monophosphate (from uridine 5-triphosphate), a reaction catalyzed by the N-terminal domain. The sequence is that of Bifunctional protein GlmU from Shewanella sp. (strain MR-7).